Here is a 313-residue protein sequence, read N- to C-terminus: Protoheme IX farnesyltransferase (313 aa).

The next 8 helical transmembrane spans lie at 32-52, 53-73, 120-140, 153-173, 180-200, 226-246, 248-268, and 284-304; these read VMSL…GDFH, PVLA…AGAL, ILVN…YVVI, IVIG…AVTG, LLLF…LALF, ILLY…LGYF, AIYG…ALRV, and LFKF…LEVV.

It belongs to the UbiA prenyltransferase family. Protoheme IX farnesyltransferase subfamily.

It localises to the cell inner membrane. The catalysed reaction is heme b + (2E,6E)-farnesyl diphosphate + H2O = Fe(II)-heme o + diphosphate. It participates in porphyrin-containing compound metabolism; heme O biosynthesis; heme O from protoheme: step 1/1. Converts heme B (protoheme IX) to heme O by substitution of the vinyl group on carbon 2 of heme B porphyrin ring with a hydroxyethyl farnesyl side group. The polypeptide is Protoheme IX farnesyltransferase (Rhodopseudomonas palustris (strain HaA2)).